Here is a 62-residue protein sequence, read N- to C-terminus: Short neurotoxin C (62 aa).

Polar residues predominate over residues 1 to 16 (RRCFNQQSSQPQTNKS). A disordered region spans residues 1–22 (RRCFNQQSSQPQTNKSCPPGEN). 4 cysteine pairs are disulfide-bonded: C3–C24, C17–C41, C43–C54, and C55–C60.

Belongs to the three-finger toxin family. Short-chain subfamily. Type I alpha-neurotoxin sub-subfamily. Expressed by the venom gland.

The protein localises to the secreted. Functionally, binds to muscle nicotinic acetylcholine receptor (nAChR) and inhibit acetylcholine from binding to the receptor, thereby impairing neuromuscular transmission. The protein is Short neurotoxin C of Laticauda laticaudata (Blue-ringed sea krait).